Reading from the N-terminus, the 260-residue chain is Caveolae-associated protein 3 (260 aa).

Positions 1-84 (MGESALESGP…SNTLAQLLAK (84 aa)) are interaction with CAVIN1. The segment at 20 to 78 (VHAVTVVTLLEKLATMLETLRERQGGLAQRQGGLAGSVRRIQSNLGALSRSHDTTSNTL) is leucine-zipper. Phosphoserine occurs at positions 62 and 70. Lysine 128 is covalently cross-linked (Glycyl lysine isopeptide (Lys-Gly) (interchain with G-Cter in SUMO2)). The interval 135–201 (AKAFQKAPEP…SGRKGHAAPT (67 aa)) is interaction with CAV1. The disordered stretch occupies residues 140–260 (KAPEPLGPVE…AAVLQVESAA (121 aa)). The span at 157–168 (AEAEESSDEEEP) shows a compositional bias: acidic residues. Serine 162, serine 163, and serine 171 each carry phosphoserine. Positions 201 to 210 (TPTPVKPPRL) are enriched in pro residues.

The protein belongs to the CAVIN family. In terms of assembly, component of the CAVIN complex composed of CAVIN1, CAVIN2, CAVIN3 and CAVIN4. Interacts with PRKCD and with phosphatidylserine. Phosphatidylserine may form a bridge between PKC and PKC-binding partners and stabilize the binding. Interacts with PER2. Interacts with CAVIN1 and EPS15L1. Interacts (via leucine-zipper domain) with CAV1 in a cholesterol-sensitive manner. In vitro, phosphorylated by PRKCD.

Its subcellular location is the cytoplasm. The protein resides in the membrane. The protein localises to the caveola. It localises to the cytosol. Functionally, regulates the traffic and/or budding of caveolae. Plays a role in caveola formation in a tissue-specific manner. Required for the formation of caveolae in smooth muscle but not in the lung and heart endothelial cells. Regulates the equilibrium between cell surface-associated and cell surface-dissociated caveolae by promoting the rapid release of caveolae from the cell surface. Plays a role in the regulation of the circadian clock. Modulates the period length and phase of circadian gene expression and also regulates expression and interaction of the core clock components PER1/2 and CRY1/2. The sequence is that of Caveolae-associated protein 3 (CAVIN3) from Bos taurus (Bovine).